The sequence spans 156 residues: Low molecular weight protein-tyrosine-phosphatase YfkJ (156 aa).

Catalysis depends on C8, which acts as the Nucleophile. The active site involves R14. The active-site Proton donor is the D125.

It belongs to the low molecular weight phosphotyrosine protein phosphatase family.

It catalyses the reaction O-phospho-L-tyrosyl-[protein] + H2O = L-tyrosyl-[protein] + phosphate. With respect to regulation, efficiently inhibited by Cu(2+) ion, Zn(2+) ion and N-ethylmaleimide, while the addition of Mg(2+), Ca(2+) or Fe(3+) ions has minimal effect. Inhibited in a competitive manner by vanadate. Dephosphorylates the phosphotyrosine-containing proteins. Involved in ethanol stress resistance. The polypeptide is Low molecular weight protein-tyrosine-phosphatase YfkJ (yfkJ) (Bacillus subtilis (strain 168)).